An 880-amino-acid chain; its full sequence is Arginine metabolism regulation protein II (880 aa).

Positions 21–48 (CWTCRGRKVKCDLRHPHCQRCEKSNLPC) form a DNA-binding region, zn(2)-C6 fungal-type.

As to quaternary structure, interacts with ARG80 and MCM1.

It localises to the cytoplasm. Its subcellular location is the nucleus. With ARG80, ARG82 and MCM1, coordinates the expression of arginine anabolic and catabolic genes in response to arginine. This Saccharomyces cerevisiae (strain ATCC 204508 / S288c) (Baker's yeast) protein is Arginine metabolism regulation protein II (ARG81).